Reading from the N-terminus, the 389-residue chain is Probable tRNA pseudouridine synthase D 1 (389 aa).

D63 serves as the catalytic Nucleophile. Residues 135-345 (GAPNYYDDQR…KYTKRPIISI (211 aa)) form the TRUD domain.

The protein belongs to the pseudouridine synthase TruD family.

It catalyses the reaction uridine(13) in tRNA = pseudouridine(13) in tRNA. Could be responsible for synthesis of pseudouridine from uracil-13 in transfer RNAs. This is Probable tRNA pseudouridine synthase D 1 (truD1) from Methanococcus maripaludis (strain DSM 14266 / JCM 13030 / NBRC 101832 / S2 / LL).